A 159-amino-acid chain; its full sequence is ATP synthase subunit b (159 aa).

Residues 7–27 (DFIWTLINFFVLLFILKILLY) form a helical membrane-spanning segment.

It belongs to the ATPase B chain family. F-type ATPases have 2 components, F(1) - the catalytic core - and F(0) - the membrane proton channel. F(1) has five subunits: alpha(3), beta(3), gamma(1), delta(1), epsilon(1). F(0) has three main subunits: a(1), b(2) and c(10-14). The alpha and beta chains form an alternating ring which encloses part of the gamma chain. F(1) is attached to F(0) by a central stalk formed by the gamma and epsilon chains, while a peripheral stalk is formed by the delta and b chains.

The protein resides in the cell membrane. F(1)F(0) ATP synthase produces ATP from ADP in the presence of a proton or sodium gradient. F-type ATPases consist of two structural domains, F(1) containing the extramembraneous catalytic core and F(0) containing the membrane proton channel, linked together by a central stalk and a peripheral stalk. During catalysis, ATP synthesis in the catalytic domain of F(1) is coupled via a rotary mechanism of the central stalk subunits to proton translocation. Functionally, component of the F(0) channel, it forms part of the peripheral stalk, linking F(1) to F(0). This is ATP synthase subunit b from Carboxydothermus hydrogenoformans (strain ATCC BAA-161 / DSM 6008 / Z-2901).